The following is a 431-amino-acid chain: Maintenance of mitochondrial morphology protein 1 (431 aa).

Residues 1 to 103 lie on the Lumenal side of the membrane; the sequence is MVSALEVKSI…QLISWSFAQG (103 aa). The helical transmembrane segment at 104–124 threads the bilayer; it reads LIIGQLSVVIFLIFFVKFFIF. Over 125 to 431 the chain is Cytoplasmic; the sequence is TDASSKMDNP…EDESSKTPHS (307 aa). The SMP-LTD domain maps to 192-404; the sequence is SAESLDWFNV…EPRFQSVKLP (213 aa). Positions 412–431 are disordered; that stretch reads NTREEVIHKTEDESSKTPHS.

This sequence belongs to the MMM1 family. In terms of assembly, homodimer. Component of the ER-mitochondria encounter structure (ERMES) or MDM complex, composed of MMM1, MDM10, MDM12 and MDM34. An MMM1 homodimer associates with one molecule of MDM12 on each side in a pairwise head-to-tail manner, and the SMP-LTD domains of MMM1 and MDM12 generate a continuous hydrophobic tunnel for phospholipid trafficking.

The protein localises to the endoplasmic reticulum membrane. In terms of biological role, component of the ERMES/MDM complex, which serves as a molecular tether to connect the endoplasmic reticulum (ER) and mitochondria. Components of this complex are involved in the control of mitochondrial shape and protein biogenesis, and function in nonvesicular lipid trafficking between the ER and mitochondria. The MDM12-MMM1 subcomplex functions in the major beta-barrel assembly pathway that is responsible for biogenesis of all outer membrane beta-barrel proteins, and acts in a late step after the SAM complex. The MDM10-MDM12-MMM1 subcomplex further acts in the TOM40-specific pathway after the action of the MDM12-MMM1 complex. Essential for establishing and maintaining the structure of mitochondria and maintenance of mtDNA nucleoids. The polypeptide is Maintenance of mitochondrial morphology protein 1 (Candida glabrata (strain ATCC 2001 / BCRC 20586 / JCM 3761 / NBRC 0622 / NRRL Y-65 / CBS 138) (Yeast)).